Here is a 157-residue protein sequence, read N- to C-terminus: 2-C-methyl-D-erythritol 2,4-cyclodiphosphate synthase (157 aa).

2 residues coordinate a divalent metal cation: aspartate 8 and histidine 10. 4-CDP-2-C-methyl-D-erythritol 2-phosphate-binding positions include 8 to 10 (DVH) and 34 to 35 (HS). Histidine 42 contacts a divalent metal cation. 4-CDP-2-C-methyl-D-erythritol 2-phosphate-binding positions include 56–58 (DIG), 61–65 (FPDTD), 100–106 (AQAPKMA), 132–135 (TTTE), phenylalanine 139, and arginine 142.

The protein belongs to the IspF family. As to quaternary structure, homotrimer. A divalent metal cation is required as a cofactor.

It carries out the reaction 4-CDP-2-C-methyl-D-erythritol 2-phosphate = 2-C-methyl-D-erythritol 2,4-cyclic diphosphate + CMP. Its pathway is isoprenoid biosynthesis; isopentenyl diphosphate biosynthesis via DXP pathway; isopentenyl diphosphate from 1-deoxy-D-xylulose 5-phosphate: step 4/6. Involved in the biosynthesis of isopentenyl diphosphate (IPP) and dimethylallyl diphosphate (DMAPP), two major building blocks of isoprenoid compounds. Catalyzes the conversion of 4-diphosphocytidyl-2-C-methyl-D-erythritol 2-phosphate (CDP-ME2P) to 2-C-methyl-D-erythritol 2,4-cyclodiphosphate (ME-CPP) with a corresponding release of cytidine 5-monophosphate (CMP). The protein is 2-C-methyl-D-erythritol 2,4-cyclodiphosphate synthase of Pseudomonas putida (strain GB-1).